The following is a 279-amino-acid chain: Dehydrogenase/reductase SDR family member 4 (279 aa).

37-61 (LVTASTDGIGLAIARRLAEDGAHVV) contacts NADP(+). Residue K93 is modified to N6-acetyllysine; alternate. K93 carries the post-translational modification N6-succinyllysine; alternate. K106 is modified (N6-acetyllysine). S170 serves as a coordination point for substrate. Y183 serves as the catalytic Proton acceptor. An NADP(+)-binding site is contributed by K187. K217 bears the N6-acetyllysine; alternate mark. K217 carries the post-translational modification N6-succinyllysine; alternate. Residue S221 is modified to Phosphoserine. Residues K228 and K235 each carry the N6-succinyllysine modification. Residues 277 to 279 (SRL) carry the Peroxisomal targeting signal motif.

Belongs to the short-chain dehydrogenases/reductases (SDR) family. As to quaternary structure, homotetramer.

It is found in the peroxisome. It catalyses the reaction a secondary alcohol + NADP(+) = a ketone + NADPH + H(+). It carries out the reaction 3alpha-hydroxy-5beta-pregnan-20-one + NADP(+) = 5beta-pregnan-3,20-dione + NADPH + H(+). The catalysed reaction is 5beta-dihydrotestosterone + NADPH + H(+) = 5beta-androstane-3alpha,17beta-diol + NADP(+). The enzyme catalyses all-trans-retinol + NADP(+) = all-trans-retinal + NADPH + H(+). It catalyses the reaction isatin + NADPH + H(+) = 3-hydroxyindolin-2-one + NADP(+). Functionally, NADPH-dependent oxidoreductase which catalyzes the reduction of a variety of compounds bearing carbonyl groups including ketosteroids, alpha-dicarbonyl compounds, aldehydes, aromatic ketones and quinones. Reduces all-trans-retinal and 9-cis retinal. Reduces 3-ketosteroids and benzil into 3alpha-hydroxysteroids and S-benzoin, respectively, in contrast to the stereoselectivity of primates DHRS4s which produce 3beta-hydroxysteroids and R-benzoin. In the reverse reaction, catalyzes the NADP-dependent oxidation of 3alpha-hydroxysteroids and alcohol, but with much lower efficiency. Involved in the metabolism of 3alpha-hydroxysteroids, retinoid, isatin and xenobiotic carbonyl compounds. This chain is Dehydrogenase/reductase SDR family member 4 (Dhrs4), found in Rattus norvegicus (Rat).